The primary structure comprises 533 residues: Chromosomal replication initiator protein DnaA (533 aa).

The tract at residues Met-1–Pro-72 is domain I, interacts with DnaA modulators. Residues Pro-72–Ser-196 are domain II. A disordered region spans residues Ala-83–Pro-110. A compositionally biased stretch (pro residues) spans Pro-96 to Pro-110. Residues Lys-197 to Ser-413 form a domain III, AAA+ region region. 4 residues coordinate ATP: Gly-241, Gly-243, Lys-244, and Thr-245. The tract at residues Lys-414–Gly-533 is domain IV, binds dsDNA.

Belongs to the DnaA family. In terms of assembly, oligomerizes as a right-handed, spiral filament on DNA at oriC.

Its subcellular location is the cytoplasm. Functionally, plays an essential role in the initiation and regulation of chromosomal replication. ATP-DnaA binds to the origin of replication (oriC) to initiate formation of the DNA replication initiation complex once per cell cycle. Binds the DnaA box (a 9 base pair repeat at the origin) and separates the double-stranded (ds)DNA. Forms a right-handed helical filament on oriC DNA; dsDNA binds to the exterior of the filament while single-stranded (ss)DNA is stabiized in the filament's interior. The ATP-DnaA-oriC complex binds and stabilizes one strand of the AT-rich DNA unwinding element (DUE), permitting loading of DNA polymerase. After initiation quickly degrades to an ADP-DnaA complex that is not apt for DNA replication. Binds acidic phospholipids. The polypeptide is Chromosomal replication initiator protein DnaA (Burkholderia mallei (strain NCTC 10247)).